Reading from the N-terminus, the 191-residue chain is NADH-quinone oxidoreductase subunit B (191 aa).

[4Fe-4S] cluster contacts are provided by C70, C71, C135, and C165.

Belongs to the complex I 20 kDa subunit family. In terms of assembly, NDH-1 is composed of 14 different subunits. Subunits NuoB, C, D, E, F, and G constitute the peripheral sector of the complex. Requires [4Fe-4S] cluster as cofactor.

The protein localises to the cell inner membrane. It carries out the reaction a quinone + NADH + 5 H(+)(in) = a quinol + NAD(+) + 4 H(+)(out). In terms of biological role, NDH-1 shuttles electrons from NADH, via FMN and iron-sulfur (Fe-S) centers, to quinones in the respiratory chain. The immediate electron acceptor for the enzyme in this species is believed to be ubiquinone. Couples the redox reaction to proton translocation (for every two electrons transferred, four hydrogen ions are translocated across the cytoplasmic membrane), and thus conserves the redox energy in a proton gradient. The protein is NADH-quinone oxidoreductase subunit B of Parvibaculum lavamentivorans (strain DS-1 / DSM 13023 / NCIMB 13966).